A 594-amino-acid chain; its full sequence is Aspartate--tRNA(Asp/Asn) ligase (594 aa).

Glutamate 176 lines the L-aspartate pocket. Residues 200–203 (QIFK) are aspartate. Arginine 222 is a binding site for L-aspartate. ATP is bound by residues 222–224 (RDE) and glutamine 231. Histidine 450 is an L-aspartate binding site. Glutamate 484 contributes to the ATP binding site. Arginine 491 serves as a coordination point for L-aspartate. Position 536–539 (536–539 (GLDR)) interacts with ATP.

The protein belongs to the class-II aminoacyl-tRNA synthetase family. Type 1 subfamily. Homodimer.

The protein resides in the cytoplasm. It carries out the reaction tRNA(Asx) + L-aspartate + ATP = L-aspartyl-tRNA(Asx) + AMP + diphosphate. Its function is as follows. Aspartyl-tRNA synthetase with relaxed tRNA specificity since it is able to aspartylate not only its cognate tRNA(Asp) but also tRNA(Asn). Reaction proceeds in two steps: L-aspartate is first activated by ATP to form Asp-AMP and then transferred to the acceptor end of tRNA(Asp/Asn). This Geobacillus sp. (strain WCH70) protein is Aspartate--tRNA(Asp/Asn) ligase.